We begin with the raw amino-acid sequence, 408 residues long: Acetate kinase (408 aa).

Asparagine 7 serves as a coordination point for Mg(2+). Lysine 14 is an ATP binding site. Substrate is bound at residue arginine 98. Catalysis depends on aspartate 155, which acts as the Proton donor/acceptor. ATP contacts are provided by residues 214–218 (HLGNG), 289–291 (DLR), and 337–341 (GVGEN). Residue glutamate 390 coordinates Mg(2+).

It belongs to the acetokinase family. In terms of assembly, homodimer. It depends on Mg(2+) as a cofactor. The cofactor is Mn(2+).

It localises to the cytoplasm. It carries out the reaction acetate + ATP = acetyl phosphate + ADP. The protein operates within metabolic intermediate biosynthesis; acetyl-CoA biosynthesis; acetyl-CoA from acetate: step 1/2. Its function is as follows. Catalyzes the formation of acetyl phosphate from acetate and ATP. Can also catalyze the reverse reaction. The sequence is that of Acetate kinase from Cyanothece sp. (strain PCC 7425 / ATCC 29141).